A 1447-amino-acid polypeptide reads, in one-letter code: Sister chromatid cohesion protein PDS5 homolog B (1447 aa).

Residues 383–419 (LLVNDHLLNFVRERTLDKRWRVRKEAMMGLAQIYKKY) form an HEAT repeat. Positions 1117–1447 (KSFFTPGKPK…RRRSAKRERR (331 aa)) are disordered. K1136 bears the N6-acetyllysine mark. Polar residues predominate over residues 1137-1155 (PLSSAGKQSQTKSSRMETV). Phosphoserine is present on residues S1140, S1162, S1166, S1176, S1182, and S1191. Over residues 1156-1167 (SNASSSSNPSSP) the composition is skewed to low complexity. The segment covering 1172 to 1184 (GRLDSSEMDHSEN) has biased composition (basic and acidic residues). Basic and acidic residues-rich tracts occupy residues 1196 to 1214 (KKSDKRDDSDLVRSELEKP) and 1225 to 1243 (QEEKLGMDDLTKLVQEQKP). Residues 1245-1254 (GSQRSRKRGH) show a composition bias toward basic residues. The segment at residues 1249 to 1261 (SRKRGHTASESDE) is a DNA-binding region (a.T hook 1). The residue at position 1255 (T1255) is a Phosphothreonine. Phosphoserine is present on residues S1257 and S1259. The segment covering 1265–1274 (PEEKRLKEDI) has biased composition (basic and acidic residues). S1283 is subject to Phosphoserine. A DNA-binding region (a.T hook 2) is located at residues 1287 to 1299 (KGKRGRPPKPLGG). The segment covering 1310–1319 (TSKKGSKKKS) has biased composition (basic residues). S1319 and S1334 each carry phosphoserine. Positions 1342 to 1353 (KSKQHRVSRRAQ) are enriched in basic residues. The span at 1355–1372 (RAESPESSAIESTQSTPQ) shows a compositional bias: polar residues. 2 positions are modified to phosphoserine: S1358 and S1366. T1367 is subject to Phosphothreonine. S1369 carries the post-translational modification Phosphoserine. Phosphothreonine is present on residues T1370 and T1381. Positions 1372 to 1384 (QKGRGRPSKTPSP) form a DNA-binding region, a.T hook 3. Positions 1379–1388 (SKTPSPSQPK) are enriched in low complexity. Phosphoserine occurs at positions 1383 and 1417. A compositionally biased stretch (acidic residues) spans 1422 to 1432 (IPQEETEEEEV). A compositionally biased stretch (basic residues) spans 1437–1447 (VRRRSAKRERR).

This sequence belongs to the PDS5 family. As to quaternary structure, interacts with the cohesin complex. Interacts with RAD21; the interaction is direct. Interacts with WAPL (via FGF motifs) or CDCA5 (via the FGF motif); the interaction is direct, cohesin-dependent and competitive. Widely expressed.

Its subcellular location is the nucleus. In terms of biological role, regulator of sister chromatid cohesion in mitosis which may stabilize cohesin complex association with chromatin. May couple sister chromatid cohesion during mitosis to DNA replication. Cohesion ensures that chromosome partitioning is accurate in both meiotic and mitotic cells and plays an important role in DNA repair. Plays a role in androgen-induced proliferative arrest in prostate cells. This Homo sapiens (Human) protein is Sister chromatid cohesion protein PDS5 homolog B (PDS5B).